The following is a 459-amino-acid chain: Argininosuccinate lyase (459 aa).

Belongs to the lyase 1 family. Argininosuccinate lyase subfamily.

It is found in the cytoplasm. It catalyses the reaction 2-(N(omega)-L-arginino)succinate = fumarate + L-arginine. Its pathway is amino-acid biosynthesis; L-arginine biosynthesis; L-arginine from L-ornithine and carbamoyl phosphate: step 3/3. This is Argininosuccinate lyase from Staphylococcus aureus (strain USA300).